Reading from the N-terminus, the 445-residue chain is Trigger factor (445 aa).

The region spanning 162-247 is the PPIase FKBP-type domain; sequence GDQVTIDAIG…IKAVHTAEPT (86 aa).

Belongs to the FKBP-type PPIase family. Tig subfamily.

It localises to the cytoplasm. The catalysed reaction is [protein]-peptidylproline (omega=180) = [protein]-peptidylproline (omega=0). Involved in protein export. Acts as a chaperone by maintaining the newly synthesized protein in an open conformation. Functions as a peptidyl-prolyl cis-trans isomerase. This Rickettsia conorii (strain ATCC VR-613 / Malish 7) protein is Trigger factor.